Reading from the N-terminus, the 341-residue chain is L-threonine 3-dehydrogenase (341 aa).

Cys38 lines the Zn(2+) pocket. Active-site charge relay system residues include Thr40 and His43. Residues His63, Glu64, Cys93, Cys96, Cys99, and Cys107 each coordinate Zn(2+). NAD(+) contacts are provided by residues Ile175, Asp195, Arg200, 262–264, and 286–287; these read LGI and IY.

It belongs to the zinc-containing alcohol dehydrogenase family. In terms of assembly, homotetramer. Zn(2+) serves as cofactor.

Its subcellular location is the cytoplasm. It catalyses the reaction L-threonine + NAD(+) = (2S)-2-amino-3-oxobutanoate + NADH + H(+). Its pathway is amino-acid degradation; L-threonine degradation via oxydo-reductase pathway; glycine from L-threonine: step 1/2. Functionally, catalyzes the NAD(+)-dependent oxidation of L-threonine to 2-amino-3-ketobutyrate. The sequence is that of L-threonine 3-dehydrogenase from Yersinia pseudotuberculosis serotype O:1b (strain IP 31758).